A 146-amino-acid chain; its full sequence is Protein E6 (146 aa).

Zinc fingers lie at residues 27–63 (CIFC…CARC) and 100–136 (CYMC…CQYC).

It belongs to the papillomaviridae E6 protein family. In terms of assembly, forms homodimers. Interacts with ubiquitin-protein ligase UBE3A/E6-AP; this interaction stimulates UBE3A ubiquitin activity. Interacts with host TP53 and EP300; this interaction inhibits TP53 activity.

It is found in the host cytoplasm. Its subcellular location is the host nucleus. Functionally, plays a major role in the induction and maintenance of cellular transformation. E6 associates with host UBE3A/E6-AP ubiquitin-protein ligase and modulates its activity. Sequesters tumor suppressor TP53 in the host cytoplasm and modulates its activity by interacting with host EP300 that results in the reduction of TP53 acetylation and activation. In turn, apoptosis induced by DNA damage is inhibited. E6 also protects host keratinocytes from apoptosis by mediating the degradation of host BAK1. May also inhibit host immune response. This chain is Protein E6, found in Homo sapiens (Human).